The primary structure comprises 245 residues: GDSL esterase/lipase At4g16220 (245 aa).

The signal sequence occupies residues 1–24 (MSSLVSRCQVIALLVLFFFGVCLA). The active-site Nucleophile is Ser-37.

Belongs to the 'GDSL' lipolytic enzyme family.

It is found in the secreted. This Arabidopsis thaliana (Mouse-ear cress) protein is GDSL esterase/lipase At4g16220.